The chain runs to 203 residues: dITP/XTP pyrophosphatase (203 aa).

16 to 21 (SHNRGK) is a binding site for substrate. Residues Glu48 and Asp77 each contribute to the Mg(2+) site. Catalysis depends on Asp77, which acts as the Proton acceptor. Substrate-binding positions include Ser78, 161–164 (FGYD), Lys184, and 189–190 (HR).

It belongs to the HAM1 NTPase family. In terms of assembly, homodimer. Mg(2+) serves as cofactor.

The catalysed reaction is XTP + H2O = XMP + diphosphate + H(+). It carries out the reaction dITP + H2O = dIMP + diphosphate + H(+). It catalyses the reaction ITP + H2O = IMP + diphosphate + H(+). Functionally, pyrophosphatase that catalyzes the hydrolysis of nucleoside triphosphates to their monophosphate derivatives, with a high preference for the non-canonical purine nucleotides XTP (xanthosine triphosphate), dITP (deoxyinosine triphosphate) and ITP. Seems to function as a house-cleaning enzyme that removes non-canonical purine nucleotides from the nucleotide pool, thus preventing their incorporation into DNA/RNA and avoiding chromosomal lesions. The chain is dITP/XTP pyrophosphatase from Rhodospirillum centenum (strain ATCC 51521 / SW).